The chain runs to 302 residues: Glutamate/aspartate import solute-binding protein (302 aa).

Positions Met-1–Ala-22 are cleaved as a signal peptide.

Belongs to the bacterial solute-binding protein 3 family. The complex is composed of two ATP-binding proteins (GltL), two transmembrane proteins (GltJ and GltK) and a solute-binding protein (GltI).

The protein localises to the periplasm. In terms of biological role, part of the ABC transporter complex GltIJKL involved in glutamate and aspartate uptake. Binds to both glutamate and aspartate. This chain is Glutamate/aspartate import solute-binding protein (gltI), found in Salmonella typhimurium (strain LT2 / SGSC1412 / ATCC 700720).